The chain runs to 191 residues: Probable GTP-binding protein EngB (191 aa).

Positions 13-189 (DRLEVAFAGR…RAEIVALLPD (177 aa)) constitute an EngB-type G domain. Residues 21–28 (GRSNVGKS), 48–52 (GRTRE), 67–70 (DLPG), 134–137 (TKTD), and 168–170 (TSS) each bind GTP. Mg(2+) contacts are provided by S28 and T50.

The protein belongs to the TRAFAC class TrmE-Era-EngA-EngB-Septin-like GTPase superfamily. EngB GTPase family. The cofactor is Mg(2+).

Functionally, necessary for normal cell division and for the maintenance of normal septation. The sequence is that of Probable GTP-binding protein EngB from Maricaulis maris (strain MCS10) (Caulobacter maris).